The chain runs to 60 residues: Putative transmembrane protein 74 (60 aa).

Transmembrane regions (helical) follow at residues 4–24 (FSVI…FLTF) and 35–55 (WVYI…YQAG).

It localises to the host membrane. The polypeptide is Putative transmembrane protein 74 (SIFV0074) (Sulfolobus islandicus filamentous virus (isolate Iceland/Hveragerdi) (SIFV)).